A 640-amino-acid polypeptide reads, in one-letter code: 1,4-alpha-glucan branching enzyme GlgB (640 aa).

Residue Asp317 is the Nucleophile of the active site. The active-site Proton donor is Glu370.

The protein belongs to the glycosyl hydrolase 13 family. GlgB subfamily. In terms of assembly, monomer.

The enzyme catalyses Transfers a segment of a (1-&gt;4)-alpha-D-glucan chain to a primary hydroxy group in a similar glucan chain.. It functions in the pathway glycan biosynthesis; glycogen biosynthesis. In terms of biological role, catalyzes the formation of the alpha-1,6-glucosidic linkages in glycogen by scission of a 1,4-alpha-linked oligosaccharide from growing alpha-1,4-glucan chains and the subsequent attachment of the oligosaccharide to the alpha-1,6 position. In Nitratidesulfovibrio vulgaris (strain DP4) (Desulfovibrio vulgaris), this protein is 1,4-alpha-glucan branching enzyme GlgB.